A 774-amino-acid chain; its full sequence is Beta-D-xylosidase 1 (774 aa).

Positions 1-30 (MSCYNKALLIGNKVVVILVFLLCLVHSSES) are cleaved as a signal peptide. N-linked (GlcNAc...) asparagine glycosylation is present at Asn131. The active site involves Asp296. N-linked (GlcNAc...) asparagine glycosylation is present at Asn658.

The protein belongs to the glycosyl hydrolase 3 family. As to expression, expressed in leaves, stems, seedlings, roots, inflorescences, siliques and developing seeds. Expressed in the vasculature of the roots, leaves, flowers and silique. Expressed in tissues undergoing secondary cell wall thickening such as protoxylem, metaxylem, intrafascicular cambium and fibers.

Its subcellular location is the secreted. The protein resides in the extracellular space. It is found in the extracellular matrix. The enzyme catalyses Hydrolysis of terminal non-reducing alpha-L-arabinofuranoside residues in alpha-L-arabinosides.. Involved in pectic arabinan modification in mucilage secretory cells. Also acts as a beta-D-xylosidase during the remodeling of xylans in vascular development. The sequence is that of Beta-D-xylosidase 1 (BXL1) from Arabidopsis thaliana (Mouse-ear cress).